A 712-amino-acid chain; its full sequence is Ribosome-releasing factor 2, mitochondrial (712 aa).

The N-terminal 29 residues, 1–29 (MLRCAWQNGPRQSNRWLRHLSNQIWKRSY), are a transit peptide targeting the mitochondrion. The region spanning 31–310 (SKIRNIGILA…AVNSYLPAPE (280 aa)) is the tr-type G domain. GTP-binding positions include 40–47 (AHIDAGKT), 104–108 (DTPGH), and 158–161 (NKMD).

It belongs to the TRAFAC class translation factor GTPase superfamily. Classic translation factor GTPase family. EF-G/EF-2 subfamily.

Its subcellular location is the mitochondrion. Its function is as follows. Mitochondrial GTPase that mediates the disassembly of ribosomes from messenger RNA at the termination of mitochondrial protein biosynthesis. Not involved in the GTP-dependent ribosomal translocation step during translation elongation. This Drosophila yakuba (Fruit fly) protein is Ribosome-releasing factor 2, mitochondrial.